A 636-amino-acid chain; its full sequence is MRLVSKLLKALLVLLLAFGSVRYSCDNYTSGELQICKYTAPQHYRAIIGGRFPQVIKYSDSLVAKYETVVVPRVGSAVIHVKDTVEQKVVPSVIRTSRSSLSLVYTKVYPRVVKYAFIAESSLCRWYLQLCHQYTVYVKPVVINLYYKTMIKYPFLEHAIYSVQAQYKIMETHVFKYYNIISYNVQVWNDKYGYGRLSRNKIFIRMKSTVVEHLIIWYRYVNNRCRKMWRENLCPIINKSRERFAYHGGVRPESATTDPDDESIFYEDDDVDEYTETSTIVLTVTQTANSALDLKATPSASGLIVDECDMSMEEMLRNDFMSWKITIENKLSNTMKDFENDINEFAQEKLDHIQPTLADLLKRASNTSQTNFQIITKAIMDVNCTESVDPKTNKTIWFDQNNTQLPKYMTRELMREYFSAAHSQFDALSQEIRAHLRKLADEVNDHVEVLRQENVELFEEWADVMITEWSKNLAYVDVAVNEEKLADLEKEQRKNWKDFMKLKRQVIKTRDTLMEHPVKLDSLQSFVNTVQQSLKTLSHENGEYLYILRSKANLEFQAREALERQQREKEKAESASMKASTEFELSSSSFSSSSPSTASSCTASSTSTASLLAVEKTIALEDLQSYYQNVSSTDSL.

A signal peptide spans 1-23 (MRLVSKLLKALLVLLLAFGSVRY). Coiled-coil stretches lie at residues 433-460 (RAHL…LFEE) and 551-584 (KANL…TEFE). The disordered stretch occupies residues 565-607 (QQREKEKAESASMKASTEFELSSSSFSSSSPSTASSCTASSTS). Low complexity predominate over residues 579–607 (ASTEFELSSSSFSSSSPSTASSCTASSTS).

It belongs to the SHE10 family. As to quaternary structure, component of the mitochondria-localized RNase mitochondrial RNA-processing (RNase MRP) composed of one single RNA encoded by the NME1 gene and at least 31 proteins. Absent in the nucleus-localized RNase MRP (NuMRP).

Its subcellular location is the mitochondrion. In terms of biological role, involved in spore wall assembly. May be a component of the mitochondrial RNase MRP (MtMRP), a ribonucleoprotein endoribonuclease involved in the cleaving RNA transcripts to generate primers for DNA replication in mitochondria. In Kluyveromyces lactis (strain ATCC 8585 / CBS 2359 / DSM 70799 / NBRC 1267 / NRRL Y-1140 / WM37) (Yeast), this protein is Outer spore wall assembly protein SHE10.